A 536-amino-acid chain; its full sequence is Signal peptide peptidase-like 5 (536 aa).

Positions 1-29 are cleaved as a signal peptide; the sequence is MSLPPFTCRLLAAAAALYLIGLLCVGADT. Topologically, residues 30–186 are lumenal; it reads KDVTAPKIPG…VELLLYAPKS (157 aa). The 77-residue stretch at 94-170 folds into the PA domain; the sequence is SNLTSKLSWS…TSSGDALKKS (77 aa). Residues Asn-95 and Asn-151 are each glycosylated (N-linked (GlcNAc...) asparagine). A helical membrane pass occupies residues 187–207; it reads PIVDYAVVFLWLMSVGTVFVA. At 208–243 the chain is on the cytoplasmic side; that stretch reads SVWSHVTSPKKNDEQYDELSPKKSSNVDATKGGAEE. The segment at 218 to 238 is disordered; it reads KNDEQYDELSPKKSSNVDATK. A helical membrane pass occupies residues 244–264; that stretch reads ETLDISAMGAVIFVISASTFL. Over 265 to 273 the chain is Lumenal; sequence VLLFFFMSS. A helical membrane pass occupies residues 274–296; that stretch reads WFILILTIFFVIGGMQGMHNINV. The Cytoplasmic segment spans residues 297 to 318; sequence TLITRRCSKCGQKNLKLPLLGN. The helical transmembrane segment at 319–339 threads the bilayer; it reads TSILSLVVLLFCFVVAILWFM. Residues 340-344 lie on the Lumenal side of the membrane; sequence NRKTS. Residues 345–365 traverse the membrane as a helical segment; sequence HAWAGQDIFGICMMINVLQVA. The Cytoplasmic segment spans residues 366–374; it reads RLPNIRVAT. A helical transmembrane segment spans residues 375–395; that stretch reads ILLCCAFFYDIFWVFISPLIF. Asp-384 is a catalytic residue. Residues 396–428 are Lumenal-facing; that stretch reads KQSVMIAVARGSKDTGESIPMLLRIPRLSDPWG. A helical transmembrane segment spans residues 429-449; sequence GYNMIGFGDILFPGLLICFIF. The active site involves Asp-437. Over 450–463 the chain is Cytoplasmic; that stretch reads RFDKENNKGVSNGY. The chain crosses the membrane as a helical span at residues 464 to 484; sequence FPWLMFGYGLGLFLTYLGLYV. Over 485–489 the chain is Lumenal; it reads MNGHG. The chain crosses the membrane as a helical span at residues 490 to 510; sequence QPALLYLVPCTLGITVILGLV. The short motif at 491–493 is the PAL element; sequence PAL. At 511 to 536 the chain is on the cytoplasmic side; the sequence is RKELRDLWNYGTQQPSAADVNPSPEA.

Belongs to the peptidase A22B family. In terms of processing, glycosylated.

Its subcellular location is the endosome membrane. Its function is as follows. Intramembrane-cleaving aspartic protease (I-CLiP) that cleaves type II membrane signal peptides in the hydrophobic plane of the membrane. This Arabidopsis thaliana (Mouse-ear cress) protein is Signal peptide peptidase-like 5 (SPPL5).